The sequence spans 85 residues: Defensin-like protein 76 (85 aa).

The N-terminal stretch at 1-27 (MQNQKHSHILTAITIVLLFAMAAKINA) is a signal peptide. 4 cysteine pairs are disulfide-bonded: Cys35–Cys70, Cys40–Cys59, Cys44–Cys68, and Cys48–Cys69.

Belongs to the DEFL family.

The protein localises to the secreted. The polypeptide is Defensin-like protein 76 (LCR86) (Arabidopsis thaliana (Mouse-ear cress)).